A 1292-amino-acid polypeptide reads, in one-letter code: Epidermal growth factor receptor (1292 aa).

At 1–641 (MYNNYNLCHI…AGLIENELQP (641 aa)) the chain is on the extracellular side. N-linked (GlcNAc...) asparagine glycosylation is found at asparagine 31, asparagine 224, asparagine 263, asparagine 323, asparagine 342, asparagine 600, and asparagine 605. The chain crosses the membrane as a helical span at residues 642–662 (AILAGVAVFALAFLVVAAIIM). The Cytoplasmic portion of the chain corresponds to 663–1292 (YFWRVRAKAK…KPLRKNETTV (630 aa)). Threonine 675 is subject to Phosphothreonine; by PKC. Residues 711–978 (MRKGGILGYG…KMSRDPGRYL (268 aa)) enclose the Protein kinase domain. ATP contacts are provided by residues 717–725 (LGYGAFGNV) and lysine 744. Residue aspartate 836 is the Proton acceptor of the active site. The disordered stretch occupies residues 1022 to 1066 (PKSRAPIPPGLSASSTSGSPPNTPVKPCWPNGKPLAADSPTPQNQ). Tyrosine 1166 carries the phosphotyrosine; by autocatalysis modification. The segment at 1253–1292 (SQVRQRSSEEESDHEYYNDFDRLERELQPLKPLRKNETTV) is disordered. Basic and acidic residues predominate over residues 1258-1292 (RSSEEESDHEYYNDFDRLERELQPLKPLRKNETTV).

This sequence belongs to the protein kinase superfamily. Tyr protein kinase family. EGF receptor subfamily.

The protein resides in the membrane. It carries out the reaction L-tyrosyl-[protein] + ATP = O-phospho-L-tyrosyl-[protein] + ADP + H(+). Activated by MRJP1 during queen determination of honeybee larvae. Functionally, upon binding to its ligands, transduces the signal through the ras-raf-MAPK pathway and is involved in a myriad of developmental decisions. Involved in the determination of adult size, ovary development, and development timing, especially during queen determination of honeybee larvae. May have an important role in the prolongation of longevity in queens. The sequence is that of Epidermal growth factor receptor (Egfr) from Apis mellifera (Honeybee).